A 141-amino-acid chain; its full sequence is HTH-type transcriptional regulator ZntR (141 aa).

The HTH merR-type domain maps to 1–70; it reads MYRIGELAKM…LESIRELLSI (70 aa). The H-T-H motif DNA-binding region spans 4–23; it reads IGELAKMAEVTPDTIRYYEK. Zn(2+) is bound by residues Cys-114, Cys-115, His-119, and Cys-124.

As to quaternary structure, homodimer.

In terms of biological role, zinc-responsive transcriptional regulator of zntA. This Escherichia coli O157:H7 protein is HTH-type transcriptional regulator ZntR (zntR).